The following is a 118-amino-acid chain: Membrane-anchored ubiquitin-fold protein 3 (118 aa).

Residues 7 to 73 (IDIKFRLYDG…LENNKTVGQC (67 aa)) form the Ubiquitin-like domain. Cysteine 113 is lipidated: S-palmitoyl cysteine. Residue cysteine 115 is modified to Cysteine methyl ester. The S-geranylgeranyl cysteine moiety is linked to residue cysteine 115. The propeptide at 116–118 (TIL) is removed in mature form.

Ubiquitous, but three fold higher expression in senescing leaves.

The protein localises to the cell membrane. May serve as docking site to facilitate the association of other proteins to the plasma membrane. The sequence is that of Membrane-anchored ubiquitin-fold protein 3 (MUB3) from Arabidopsis thaliana (Mouse-ear cress).